The sequence spans 571 residues: 5' exonuclease Apollo (571 aa).

Disordered stretches follow at residues 346 to 386 (TSRP…TDRN) and 431 to 487 (MDDN…SMHD). Composition is skewed to basic and acidic residues over residues 367–386 (NHDDMDSNDTEIDHDTTDRN) and 453–468 (ECDHESPTKSSKEKSP). Residues 470–487 (MGSTNSGEMCSSMDSMHD) are compositionally biased toward polar residues. The TBM signature appears at 501–532 (NPQSVTSAIPITLESEQFEHWLLENFTIPAEE).

The protein belongs to the DNA repair metallo-beta-lactamase (DRMBL) family. In terms of assembly, interacts with terf2; the interaction is direct.

Its subcellular location is the chromosome. It is found in the telomere. The protein localises to the nucleus. It catalyses the reaction a beta-lactam + H2O = a substituted beta-amino acid. In terms of biological role, 5'-3' exonuclease that plays a central role in telomere maintenance and protection during S-phase. Participates in the protection of telomeres against non-homologous end-joining (NHEJ)-mediated repair, thereby ensuring that telomeres do not fuse. Plays a key role in telomeric loop (T loop) formation by being recruited by terf2 at the leading end telomeres and by processing leading-end telomeres immediately after their replication via its exonuclease activity: generates 3' single-stranded overhang at the leading end telomeres avoiding blunt leading-end telomeres that are vulnerable to end-joining reactions and expose the telomere end in a manner that activates the DNA repair pathways. Possesses beta-lactamase activity, catalyzing the hydrolysis of penicillin G and nitrocefin. Exhibits no activity towards other beta-lactam antibiotic classes including cephalosporins (cefotaxime) and carbapenems (imipenem). This chain is 5' exonuclease Apollo (dclre1b), found in Danio rerio (Zebrafish).